The sequence spans 302 residues: Trans-4-hydroxy-L-proline dehydratase activating enzyme (302 aa).

Residues histidine 14–asparagine 297 enclose the Radical SAM core domain. Positions 28, 32, 35, 54, 57, 60, and 93 each coordinate [4Fe-4S] cluster. Tryptophan 34 to histidine 36 provides a ligand contact to S-adenosyl-L-methionine. 4Fe-4S ferredoxin-type domains lie at lysine 45–threonine 74 and lysine 75–glutamine 103. Residues glycine 133, aspartate 183–lysine 185, and histidine 257 each bind S-adenosyl-L-methionine.

This sequence belongs to the organic radical-activating enzymes family. [4Fe-4S] cluster serves as cofactor.

It carries out the reaction glycyl-[protein] + reduced [flavodoxin] + S-adenosyl-L-methionine = glycin-2-yl radical-[protein] + semiquinone [flavodoxin] + 5'-deoxyadenosine + L-methionine + H(+). In terms of biological role, catalyzes activation of the trans-4-hydroxy-L-proline dehydratase under anaerobic conditions by generation of an organic free radical on a glycine residue, via a homolytic cleavage of S-adenosyl-L-methionine (SAM). Is involved in the anaerobic degradation of 4-hydroxyproline. This is Trans-4-hydroxy-L-proline dehydratase activating enzyme from Clostridioides difficile (Peptoclostridium difficile).